Here is a 267-residue protein sequence, read N- to C-terminus: Phosphatidylcholine synthase (267 aa).

The Cytoplasmic segment spans residues 1–42 (MILWRIVRPGAAMAYVQTGLVLIAEAMDTQQDSLKPRPAMRA). A helical membrane pass occupies residues 43–63 (AAFSVHVFTAFGAAIALLAML). Topologically, residues 64–69 (EAVREH) are periplasmic. A helical membrane pass occupies residues 70–90 (WAAMFQWLGVALIIDAIDGPI). At 91–102 (ARRLDVKNVQPN) the chain is on the cytoplasmic side. Residues 103 to 123 (WSGDVLDLVVDFVTYVFVPAY) form a helical membrane-spanning segment. Position 124 (A124) is a topological domain, periplasmic. Residues 125–145 (IVASGLLLPVAAPLLGVAIIV) form a helical membrane-spanning segment. At 146–162 (TSALYFADLRMKADDNH) the chain is on the cytoplasmic side. Residues 163–183 (FRGFPALWNAAAFYLFLLHWP) form a helical membrane-spanning segment. P184 is a topological domain (periplasmic). A helical transmembrane segment spans residues 185-205 (LWSTLLVAALVVLTFVPFHVL). Residues 206-215 (HPVRVVRLRW) lie on the Cytoplasmic side of the membrane. Residues 216-236 (LTMSLIGIWAVLSLYTLDMDF) form a helical membrane-spanning segment. Over 237–239 (RVG) the chain is Periplasmic. A helical membrane pass occupies residues 240–260 (PGVTLALCAIALWISFSDALI). At 261–267 (RFARSFA) the chain is on the cytoplasmic side.

It belongs to the CDP-alcohol phosphatidyltransferase class-I family. Mn(2+) is required as a cofactor.

The protein resides in the cell inner membrane. The catalysed reaction is a CDP-1,2-diacyl-sn-glycerol + choline = a 1,2-diacyl-sn-glycero-3-phosphocholine + CMP + H(+). Functionally, condenses choline with CDP-diglyceride to produce phosphatidylcholine and CMP. The protein is Phosphatidylcholine synthase of Bradyrhizobium diazoefficiens (strain JCM 10833 / BCRC 13528 / IAM 13628 / NBRC 14792 / USDA 110).